The following is a 143-amino-acid chain: MAIERTFSIIKPNAVAKNVIGNIFARFEAAGFKIVGTKMLHLTVEQARGFYAEHDGKPFFDGLVEFMTSGPIVVSVLESENAVQRHRDLLGATNPANALAGTLRADYADSFTENGTHGSDSLESAQREIAYFFGEGEVCPRTR.

The ATP site is built by lysine 11, phenylalanine 59, arginine 87, threonine 93, arginine 104, and asparagine 114. Histidine 117 functions as the Pros-phosphohistidine intermediate in the catalytic mechanism.

The protein belongs to the NDK family. In terms of assembly, homotetramer. Mg(2+) serves as cofactor.

It localises to the cytoplasm. It carries out the reaction a 2'-deoxyribonucleoside 5'-diphosphate + ATP = a 2'-deoxyribonucleoside 5'-triphosphate + ADP. The catalysed reaction is a ribonucleoside 5'-diphosphate + ATP = a ribonucleoside 5'-triphosphate + ADP. Major role in the synthesis of nucleoside triphosphates other than ATP. The ATP gamma phosphate is transferred to the NDP beta phosphate via a ping-pong mechanism, using a phosphorylated active-site intermediate. In Citrobacter koseri (strain ATCC BAA-895 / CDC 4225-83 / SGSC4696), this protein is Nucleoside diphosphate kinase.